Here is a 292-residue protein sequence, read N- to C-terminus: uncharacterized protein (292 aa).

Disordered stretches follow at residues 29-50 (SEKP…LRDS) and 166-292 (VKRK…EELK). Ser50 is subject to Phosphoserine. Polar residues-rich tracts occupy residues 176-189 (NSKN…PVNN) and 208-217 (GSPTNFSKLI). Basic and acidic residues predominate over residues 221–239 (YKDEWLQQQKADSDRRTPK). 2 stretches are compositionally biased toward polar residues: residues 240-250 (TSEASVSTQST) and 260-270 (DTETPQNSETP).

Post-translationally, phosphorylated upon DNA damage.

This is an uncharacterized protein from Rattus norvegicus (Rat).